We begin with the raw amino-acid sequence, 514 residues long: Peptide chain release factor 3 (514 aa).

Residues 8 to 268 (KKRRTFAIIS…TFLEFAPEPH (261 aa)) enclose the tr-type G domain. GTP is bound by residues 17-24 (SHPDAGKT), 85-89 (DTPGH), and 139-142 (NKLD).

The protein belongs to the TRAFAC class translation factor GTPase superfamily. Classic translation factor GTPase family. PrfC subfamily.

The protein resides in the cytoplasm. In terms of biological role, increases the formation of ribosomal termination complexes and stimulates activities of RF-1 and RF-2. It binds guanine nucleotides and has strong preference for UGA stop codons. It may interact directly with the ribosome. The stimulation of RF-1 and RF-2 is significantly reduced by GTP and GDP, but not by GMP. This Streptococcus uberis (strain ATCC BAA-854 / 0140J) protein is Peptide chain release factor 3.